The primary structure comprises 227 residues: Lysosomal-associated transmembrane protein 4B (227 aa).

4 consecutive transmembrane segments (helical) span residues 26-46 (ILLGVWYLIINAVVLLILLSA), 72-92 (MCIAIAISLLMILICAMATYG), 100-120 (WIIPFFCYQIFDFALNTLVAI), and 153-173 (CLVLIILLFIGILLTLKGYLI). The interval 205–222 (PPYDDATAVPSTAKEPPP) is required for NEDD4 interaction.

This sequence belongs to the LAPTM4/LAPTM5 transporter family. In terms of assembly, homooligomer; upon reaching the lysosomes. Interacts with MCOLN1. Interacts with NEDD4; may play a role in the lysosomal sorting of LAPTM4B; enhances HGS association with NEDD4; mediates inhibition of EGFR degradation. Interacts with PIP5K1C; promotes SNX5 association with LAPTM4B; kinase activity of PIP5K1C is required; interaction is regulated by phosphatidylinositol 4,5-bisphosphate generated by PIP5K1C. Interacts with HGS; promotes HGS ubiquitination. Interacts with SNX5. Interacts with SLC3A2 and SLC7A5; recruits SLC3A2 and SLC7A5 to lysosomes to promote leucine uptake into these organelles and is required for mTORC1 activation. Interacts with LRRC32; decreases TGFB1 production in regulatory T cells. Interacts with BECN1; competes with EGFR for LAPTM4B binding; regulates EGFR activity. Interacts with EGFR; positively correlates with EGFR activation. Post-translationally, undergoes proteolytic cleavage following delivery to the lysosomes. Ubiquitinated by NEDD4.

It localises to the endomembrane system. The protein resides in the late endosome membrane. The protein localises to the cell membrane. Its subcellular location is the cell projection. It is found in the lysosome membrane. It localises to the endosome membrane. The protein resides in the endosome. The protein localises to the multivesicular body membrane. Its subcellular location is the multivesicular body lumen. Required for optimal lysosomal function. Blocks EGF-stimulated EGFR intraluminal sorting and degradation. Conversely by binding with the phosphatidylinositol 4,5-bisphosphate, regulates its PIP5K1C interaction, inhibits HGS ubiquitination and relieves LAPTM4B inhibition of EGFR degradation. Recruits SLC3A2 and SLC7A5 (the Leu transporter) to the lysosome, promoting entry of leucine and other essential amino acid (EAA) into the lysosome, stimulating activation of proton-transporting vacuolar (V)-ATPase protein pump (V-ATPase) and hence mTORC1 activation. Plays a role as negative regulator of TGFB1 production in regulatory T cells. Binds ceramide and facilitates its exit from late endosome in order to control cell death pathways. This is Lysosomal-associated transmembrane protein 4B from Mus musculus (Mouse).